The following is a 231-amino-acid chain: Ribose-5-phosphate isomerase A (231 aa).

Substrate contacts are provided by residues Thr40–Thr43, Asp93–Asp96, and Lys106–Gly109. The active-site Proton acceptor is the Glu115. Lys133 provides a ligand contact to substrate.

This sequence belongs to the ribose 5-phosphate isomerase family. In terms of assembly, homodimer.

The enzyme catalyses aldehydo-D-ribose 5-phosphate = D-ribulose 5-phosphate. The protein operates within carbohydrate degradation; pentose phosphate pathway; D-ribose 5-phosphate from D-ribulose 5-phosphate (non-oxidative stage): step 1/1. Catalyzes the reversible conversion of ribose-5-phosphate to ribulose 5-phosphate. This is Ribose-5-phosphate isomerase A from Escherichia coli O1:K1 / APEC.